A 379-amino-acid polypeptide reads, in one-letter code: MMKPERKTHPLLMIINNSLIDLPTPSNISYLWNYGSLLGITLVFQIMTGIMLAMHYSDNMDLAFSSMIHISRDVNYGWMIRFFHGNGASFFFICLYVHIGRSIYYNSYKLNYTWNIGIIILLLTMATAFLGYVLPWGQMSFWGATVITNLLSAIPYIGMTIVNWLWGGFAVSNATLTRFFSLHFLLPFIISAMVMIHLLFLHQTGSNNPLGLNSNTDKIPFHQYFSIKDLITMMLFIMILSFLVLFSPNILGDPENYIPANPLVTPIHIQPEWYFLFAYAILRSIPNKLGGVIALLMSIMILFFLPIFSKNCFSTSFNKWSGMIFWSFINIIILLTWIGANPVEAPYIIFGQILSVLYFLTFFWMPYSMVLFQKIIELL.

4 helical membrane-spanning segments follow: residues 34–54 (YGSL…MLAM), 78–100 (WMIR…VHIG), 113–133 (TWNI…LGYV), and 179–199 (FFSL…IHLL). Residues His-84 and His-98 each coordinate heme b. Residues His-183 and His-197 each contribute to the heme b site. His-202 contributes to the a ubiquinone binding site. The next 4 helical transmembrane spans lie at 225 to 245 (FSIK…FLVL), 289 to 309 (LGGV…PIFS), 320 to 340 (WSGM…WIGA), and 345 to 365 (APYI…FFWM).

This sequence belongs to the cytochrome b family. In terms of assembly, the main subunits of complex b-c1 are: cytochrome b, cytochrome c1 and the Rieske protein. Requires heme b as cofactor.

Its subcellular location is the mitochondrion inner membrane. Functionally, component of the ubiquinol-cytochrome c reductase complex (complex III or cytochrome b-c1 complex) that is part of the mitochondrial respiratory chain. The b-c1 complex mediates electron transfer from ubiquinol to cytochrome c. Contributes to the generation of a proton gradient across the mitochondrial membrane that is then used for ATP synthesis. The polypeptide is Cytochrome b (mt:Cyt-b) (Epiperipatus biolleyi (Velvet worm)).